A 59-amino-acid chain; its full sequence is Large ribosomal subunit protein bL32 (59 aa).

The protein belongs to the bacterial ribosomal protein bL32 family.

This Desulfitobacterium hafniense (strain Y51) protein is Large ribosomal subunit protein bL32.